The sequence spans 137 residues: NADH dehydrogenase [ubiquinone] 1 beta subcomplex subunit 7 (137 aa).

The N-myristoyl glycine moiety is linked to residue G2. Residues 56–98 (RDYCAHYLIRFLKCKRDSFPNFLACKHERHDWDYCEHLDYVKR) enclose the CHCH domain. The Cx9C motif 1 signature appears at 59 to 69 (CAHYLIRFLKC). Disulfide bonds link C59–C90 and C69–C80. S73 is modified (phosphoserine). A Cx9C motif 2 motif is present at residues 80 to 90 (CKHERHDWDYC). The segment at 110–137 (QRKKRREQREADMAKGLGPGEVAPEVAL) is disordered.

This sequence belongs to the complex I NDUFB7 subunit family. In terms of assembly, complex I is composed of 45 different subunits.

Its subcellular location is the mitochondrion inner membrane. The protein localises to the mitochondrion intermembrane space. In terms of biological role, accessory subunit of the mitochondrial membrane respiratory chain NADH dehydrogenase (Complex I), that is believed not to be involved in catalysis. Complex I functions in the transfer of electrons from NADH to the respiratory chain. The immediate electron acceptor for the enzyme is believed to be ubiquinone. This is NADH dehydrogenase [ubiquinone] 1 beta subcomplex subunit 7 (NDUFB7) from Bos taurus (Bovine).